The chain runs to 192 residues: ER protein translocation subcomplex subunit sec67 (192 aa).

In terms of assembly, component of the heterotetrameric Sec62/63complex composed of sec62, sec63, sec66 and sec72. The Sec62/63 complex associates with the Sec61 complex to form the Sec complex.

It localises to the cytoplasm. The protein localises to the nucleus. In terms of biological role, acts as a non-essential component of the Sec62/63 complex which is involved in SRP-independent post-translational translocation across the endoplasmic reticulum (ER) and functions together with the Sec61 complex and bip1 in a channel-forming translocon complex. A cycle of assembly and disassembly of Sec62/63 complex from sec61 may govern the activity of the translocon. sec72 may be involved in signal peptide recognition for a defined subset of leader peptides, or may increase the efficiency of unusual or 'difficult' secretory precursors to the translocation pore, it may be that this protein binds charged leader peptides to the membrane until they engage the translocation apparatus. The chain is ER protein translocation subcomplex subunit sec67 (sec67) from Schizosaccharomyces pombe (strain 972 / ATCC 24843) (Fission yeast).